Here is a 345-residue protein sequence, read N- to C-terminus: Cuticle collagen 14 (345 aa).

3 triple-helical region regions span residues 156–185 (GPPG…PGPP), 207–263 (GDGG…PGTY), and 268–333 (GPAG…PGSC). A disordered region spans residues 161–345 (AGDGGRDGAD…CPPARLAPGY (185 aa)). Composition is skewed to pro residues over residues 179–191 (IGPP…PGPD), 198–223 (PQCP…PPGA), and 278–290 (RPGP…PAGP). The span at 292-304 (GENGKGGGQGPSG) shows a compositional bias: gly residues.

The protein belongs to the cuticular collagen family. As to quaternary structure, collagen polypeptide chains are complexed within the cuticle by disulfide bonds and other types of covalent cross-links.

Its function is as follows. Nematode cuticles are composed largely of collagen-like proteins. The cuticle functions both as an exoskeleton and as a barrier to protect the worm from its environment. The polypeptide is Cuticle collagen 14 (col-14) (Caenorhabditis elegans).